The sequence spans 415 residues: Fructose-1,6-bisphosphatase, chloroplastic (415 aa).

A chloroplast-targeting transit peptide spans 1–57; the sequence is MASIGPATTTAVKLRSSIFNPQSSTLSPSQQCITFTKSLHSFPTATRHNVASGVRCM. Residues Glu135, Glu164, Asp185, Leu187, and Asp188 each coordinate Mg(2+). Residue 188–191 coordinates substrate; the sequence is DGSS. The tract at residues 207-232 is involved in light regulation; that stretch reads SPNDECIVDSDHDDESQLSAEEQRCV. Residues Cys231 and Cys236 are joined by a disulfide bond. The substrate site is built by Asn295, Tyr327, Tyr345, Tyr347, and Lys357. Glu363 is a Mg(2+) binding site.

Belongs to the FBPase class 1 family. Homotetramer. It depends on Mg(2+) as a cofactor.

Its subcellular location is the plastid. It localises to the chloroplast. It carries out the reaction beta-D-fructose 1,6-bisphosphate + H2O = beta-D-fructose 6-phosphate + phosphate. It participates in carbohydrate biosynthesis; Calvin cycle. The chain is Fructose-1,6-bisphosphatase, chloroplastic from Spinacia oleracea (Spinach).